We begin with the raw amino-acid sequence, 917 residues long: Transcription factor E2F8 (917 aa).

The tract at residues 1-122 (MSSTLSEGQT…TEQGEEVEKL (122 aa)) is disordered. Composition is skewed to polar residues over residues 16–27 (LSPSKATSTNNK) and 37–48 (PLKNSNKASTSE). The segment covering 93–103 (IRNREKERAVD) has biased composition (basic and acidic residues). The span at 105 to 117 (SESENSQETEQGE) shows a compositional bias: acidic residues. A DNA-binding region spans residues 126–195 (RKDKSLGLLC…LAKNRYTWHG (70 aa)). Disordered regions lie at residues 221 to 252 (QIRQ…FEVD), 353 to 386 (PAFK…SRSS), 461 to 497 (EQSA…GMQI), 556 to 615 (VGAN…SVSP), 671 to 698 (LEKE…QPQK), and 813 to 834 (GSVT…PHPG). Over residues 233-252 (EFDLDGEEKENEEMSSFEVD) the composition is skewed to acidic residues. A DNA-binding region spans residues 273–359 (RKDKSLRVMS…GRKPAFKWTG (87 aa)). Polar residues predominate over residues 371–386 (ISTTSSAPKPLESRSS). Composition is skewed to low complexity over residues 475–488 (SSQS…TSAS) and 568–578 (TSNNQTNQSSS). Positions 595-605 (EKSSVGSPSKM) are enriched in polar residues. Over residues 815–830 (VTPNPHTPEQSSSLQS) the composition is skewed to polar residues.

Belongs to the E2F/DP family. As to quaternary structure, homodimer and heterodimer: mainly forms homodimers and, to a lesser extent, heterodimers with e2f7.

It localises to the nucleus. Functionally, atypical E2F transcription factor that participates in various processes such as angiogenesis and polyploidization of specialized cells. Mainly acts as a transcription repressor that binds DNA independently of DP proteins and specifically recognizes the E2 recognition site 5'-TTTC[CG]CGC-3'. Directly represses transcription of classical E2F transcription factors such as e2f1. Acts as a regulator of S-phase by recognizing and binding the E2-related site 5'-TTCCCGCC-3' and mediating repression of G1/S-regulated genes. Acts as a promoter of sprouting angiogenesis, possibly by acting as a transcription activator and promoting expression of vegfa. The chain is Transcription factor E2F8 (e2f8) from Danio rerio (Zebrafish).